A 62-amino-acid chain; its full sequence is Photosystem II reaction center protein Z (62 aa).

2 consecutive transmembrane segments (helical) span residues 8-28 (AVFA…AVFA) and 41-61 (FSGA…NSSV).

This sequence belongs to the PsbZ family. As to quaternary structure, PSII is composed of 1 copy each of membrane proteins PsbA, PsbB, PsbC, PsbD, PsbE, PsbF, PsbH, PsbI, PsbJ, PsbK, PsbL, PsbM, PsbT, PsbY, PsbZ, Psb30/Ycf12, at least 3 peripheral proteins of the oxygen-evolving complex and a large number of cofactors. It forms dimeric complexes.

The protein resides in the plastid. The protein localises to the chloroplast thylakoid membrane. Its function is as follows. May control the interaction of photosystem II (PSII) cores with the light-harvesting antenna, regulates electron flow through the 2 photosystem reaction centers. PSII is a light-driven water plastoquinone oxidoreductase, using light energy to abstract electrons from H(2)O, generating a proton gradient subsequently used for ATP formation. This chain is Photosystem II reaction center protein Z, found in Selaginella uncinata (Blue spike-moss).